A 162-amino-acid polypeptide reads, in one-letter code: NAD(P)H-quinone oxidoreductase subunit N (162 aa).

This sequence belongs to the complex I NdhN subunit family. In terms of assembly, NDH-1 can be composed of about 15 different subunits; different subcomplexes with different compositions have been identified which probably have different functions.

It localises to the cellular thylakoid membrane. It carries out the reaction a plastoquinone + NADH + (n+1) H(+)(in) = a plastoquinol + NAD(+) + n H(+)(out). The catalysed reaction is a plastoquinone + NADPH + (n+1) H(+)(in) = a plastoquinol + NADP(+) + n H(+)(out). Its function is as follows. NDH-1 shuttles electrons from an unknown electron donor, via FMN and iron-sulfur (Fe-S) centers, to quinones in the respiratory and/or the photosynthetic chain. The immediate electron acceptor for the enzyme in this species is believed to be plastoquinone. Couples the redox reaction to proton translocation, and thus conserves the redox energy in a proton gradient. Cyanobacterial NDH-1 also plays a role in inorganic carbon-concentration. The sequence is that of NAD(P)H-quinone oxidoreductase subunit N from Nostoc sp. (strain PCC 7120 / SAG 25.82 / UTEX 2576).